We begin with the raw amino-acid sequence, 211 residues long: Thymidylate kinase (211 aa).

7–14 (GIDGCGKT) is an ATP binding site.

It belongs to the thymidylate kinase family.

The enzyme catalyses dTMP + ATP = dTDP + ADP. Phosphorylation of dTMP to form dTDP in both de novo and salvage pathways of dTTP synthesis. In Anaplasma marginale (strain Florida), this protein is Thymidylate kinase.